Here is a 180-residue protein sequence, read N- to C-terminus: Major urinary protein 2 (180 aa).

The signal sequence occupies residues 1 to 18; it reads MKMLLLLCLGLTLVCVHA. A disulfide bridge connects residues Cys-82 and Cys-175.

This sequence belongs to the calycin superfamily. Lipocalin family. In terms of tissue distribution, abundant in the urine of adult male mice but absent from that of females.

It is found in the secreted. In terms of biological role, binds pheromones that are released from drying urine of males. These pheromones affect the sexual behavior of females. The sequence is that of Major urinary protein 2 (Mup2) from Mus musculus (Mouse).